We begin with the raw amino-acid sequence, 273 residues long: Dermonecrotic toxin LhSicTox-alphaIA1iii (273 aa).

Histidine 5 is a catalytic residue. Glutamate 25 and aspartate 27 together coordinate Mg(2+). The active-site Nucleophile is histidine 41. Intrachain disulfides connect cysteine 45/cysteine 51 and cysteine 47/cysteine 190. Aspartate 85 serves as a coordination point for Mg(2+).

This sequence belongs to the arthropod phospholipase D family. Class II subfamily. It depends on Mg(2+) as a cofactor. In terms of tissue distribution, expressed by the venom gland.

It localises to the secreted. It catalyses the reaction an N-(acyl)-sphingosylphosphocholine = an N-(acyl)-sphingosyl-1,3-cyclic phosphate + choline. The catalysed reaction is an N-(acyl)-sphingosylphosphoethanolamine = an N-(acyl)-sphingosyl-1,3-cyclic phosphate + ethanolamine. The enzyme catalyses a 1-acyl-sn-glycero-3-phosphocholine = a 1-acyl-sn-glycero-2,3-cyclic phosphate + choline. It carries out the reaction a 1-acyl-sn-glycero-3-phosphoethanolamine = a 1-acyl-sn-glycero-2,3-cyclic phosphate + ethanolamine. Dermonecrotic toxins cleave the phosphodiester linkage between the phosphate and headgroup of certain phospholipids (sphingolipid and lysolipid substrates), forming an alcohol (often choline) and a cyclic phosphate. This toxin acts on sphingomyelin (SM). It may also act on ceramide phosphoethanolamine (CPE), lysophosphatidylcholine (LPC) and lysophosphatidylethanolamine (LPE), but not on lysophosphatidylserine (LPS), and lysophosphatidylglycerol (LPG). It acts by transphosphatidylation, releasing exclusively cyclic phosphate products as second products. Induces dermonecrosis, hemolysis, increased vascular permeability, edema, inflammatory response, and platelet aggregation. This is Dermonecrotic toxin LhSicTox-alphaIA1iii from Loxosceles hirsuta (Recluse spider).